The primary structure comprises 238 residues: 2-phytyl-1,4-naphtoquinone methyltransferase (238 aa).

The protein belongs to the class I-like SAM-binding methyltransferase superfamily. MenG/UbiE family.

The catalysed reaction is demethylphylloquinol + S-adenosyl-L-methionine = phylloquinol + S-adenosyl-L-homocysteine + H(+). The protein operates within cofactor biosynthesis; phylloquinone biosynthesis. Functionally, methyltransferase required for the conversion of 2-phytyl-1,4-beta-naphthoquinol to phylloquinol. This Synechocystis sp. (strain ATCC 27184 / PCC 6803 / Kazusa) protein is 2-phytyl-1,4-naphtoquinone methyltransferase.